The primary structure comprises 120 residues: Large ribosomal subunit protein uL18 (120 aa).

Belongs to the universal ribosomal protein uL18 family. In terms of assembly, part of the 50S ribosomal subunit; part of the 5S rRNA/L5/L18/L25 subcomplex. Contacts the 5S and 23S rRNAs.

In terms of biological role, this is one of the proteins that bind and probably mediate the attachment of the 5S RNA into the large ribosomal subunit, where it forms part of the central protuberance. The polypeptide is Large ribosomal subunit protein uL18 (Clostridium novyi (strain NT)).